We begin with the raw amino-acid sequence, 249 residues long: 2,3-bisphosphoglycerate-dependent phosphoglycerate mutase (249 aa).

Residues 8-15 (RHGESIWN), 21-22 (TG), R60, 87-90 (ERHY), K98, 114-115 (RR), and 183-184 (GN) each bind substrate. H9 acts as the Tele-phosphohistidine intermediate in catalysis. The Proton donor/acceptor role is filled by E87.

The protein belongs to the phosphoglycerate mutase family. BPG-dependent PGAM subfamily.

It catalyses the reaction (2R)-2-phosphoglycerate = (2R)-3-phosphoglycerate. It functions in the pathway carbohydrate degradation; glycolysis; pyruvate from D-glyceraldehyde 3-phosphate: step 3/5. Functionally, catalyzes the interconversion of 2-phosphoglycerate and 3-phosphoglycerate. The chain is 2,3-bisphosphoglycerate-dependent phosphoglycerate mutase from Caldanaerobacter subterraneus subsp. tengcongensis (strain DSM 15242 / JCM 11007 / NBRC 100824 / MB4) (Thermoanaerobacter tengcongensis).